A 1132-amino-acid polypeptide reads, in one-letter code: DNA-directed RNA polymerase subunit beta (1132 aa).

It belongs to the RNA polymerase beta chain family. In terms of assembly, the RNAP catalytic core consists of 2 alpha, 1 beta, 1 beta' and 1 omega subunit. When a sigma factor is associated with the core the holoenzyme is formed, which can initiate transcription.

The enzyme catalyses RNA(n) + a ribonucleoside 5'-triphosphate = RNA(n+1) + diphosphate. Functionally, DNA-dependent RNA polymerase catalyzes the transcription of DNA into RNA using the four ribonucleoside triphosphates as substrates. The protein is DNA-directed RNA polymerase subunit beta of Carboxydothermus hydrogenoformans (strain ATCC BAA-161 / DSM 6008 / Z-2901).